The following is a 592-amino-acid chain: Ichor (592 aa).

Over residues 114-123 (NNNYMQSAYH) the composition is skewed to polar residues. Disordered stretches follow at residues 114–156 (NNNY…VSSS), 343–377 (LQNR…QAPT), 416–439 (LSNP…MQAS), and 459–527 (HTTT…DLSG). The span at 124-148 (PQNQSNPTSTTQSNGGSNSNSNNSN) shows a compositional bias: low complexity. The segment covering 356 to 369 (SSGGGGGANQGAGI) has biased composition (gly residues). Polar residues predominate over residues 459 to 469 (HTTTASTTGSE). Positions 488–500 (QQQQQQQQQQQQQ) are enriched in low complexity. A compositionally biased stretch (polar residues) spans 507–524 (PTTPQMSAISPSGFSASD). 2 consecutive C2H2-type zinc fingers follow at residues 536 to 558 (HRCS…LRTH) and 564 to 586 (FRCD…QQIH).

It is found in the nucleus. In terms of biological role, transcriptional activator. In tracheal terminal cells, regulates the transcription of factors involved in the formation of a mature apical extracellular matrix (aECM) which is essential for the integrity and shape of seamless tubes. The polypeptide is Ichor (Drosophila melanogaster (Fruit fly)).